Reading from the N-terminus, the 454-residue chain is Asparagine--tRNA ligase (454 aa).

The protein belongs to the class-II aminoacyl-tRNA synthetase family. As to quaternary structure, homodimer.

It is found in the cytoplasm. The enzyme catalyses tRNA(Asn) + L-asparagine + ATP = L-asparaginyl-tRNA(Asn) + AMP + diphosphate + H(+). The polypeptide is Asparagine--tRNA ligase (Mycoplasma capricolum subsp. capricolum (strain California kid / ATCC 27343 / NCTC 10154)).